The sequence spans 185 residues: MISDIRKDAEVRMEKCVEAFKTQISKVRTGRASPSLLDGIVVEYYGTPTPLRQLASVTVEDSRTLKINVFDRSMGPAVEKAIMASDLGLNPSSAGTDIRVPLPPLTEERRKDLTKIVRGEAEQARVAVRNVRRDANDKVKALLKDKAISEDDDRRSQEEVQKMTDAAIKKVDAALADKEAELMQF.

The protein belongs to the RRF family.

It localises to the cytoplasm. Responsible for the release of ribosomes from messenger RNA at the termination of protein biosynthesis. May increase the efficiency of translation by recycling ribosomes from one round of translation to another. This chain is Ribosome-recycling factor, found in Salmonella arizonae (strain ATCC BAA-731 / CDC346-86 / RSK2980).